A 225-amino-acid polypeptide reads, in one-letter code: Heptaprenylglyceryl phosphate synthase (225 aa).

K6 contacts sn-glycerol 1-phosphate. Mg(2+) contacts are provided by D8 and T34. Sn-glycerol 1-phosphate-binding positions include 153–158 (YVEYSG), G183, and 203–204 (GN).

Belongs to the GGGP/HepGP synthase family. Group I subfamily. Homodimer. It depends on Mg(2+) as a cofactor.

It carries out the reaction sn-glycerol 1-phosphate + all-trans-heptaprenyl diphosphate = 3-heptaprenyl-sn-glycero-1-phosphate + diphosphate. It participates in membrane lipid metabolism; glycerophospholipid metabolism. In terms of biological role, prenyltransferase that catalyzes in vivo the transfer of the heptaprenyl moiety of heptaprenyl pyrophosphate (HepPP; 35 carbon atoms) to the C3 hydroxyl of sn-glycerol-1-phosphate (G1P), producing heptaprenylglyceryl phosphate (HepGP). This reaction is an ether-bond-formation step in the biosynthesis of archaea-type G1P-based membrane lipids found in Bacillales. The chain is Heptaprenylglyceryl phosphate synthase from Listeria monocytogenes serotype 4b (strain CLIP80459).